Here is an 88-residue protein sequence, read N- to C-terminus: MEKRDFHVVADTGIHARPATLLVQTASKFNSDVNLEYKGKSVNLKSIMGVMSLGVGQGADVTISAEGADEADAINAIEETMKKEGLSE.

The 88-residue stretch at 1–88 (MEKRDFHVVA…ETMKKEGLSE (88 aa)) folds into the HPr domain. The active-site Pros-phosphohistidine intermediate is His15. Phosphoserine; by HPrK/P is present on Ser46.

Belongs to the HPr family.

It is found in the cytoplasm. Phosphorylation on Ser-46 inhibits the phosphoryl transfer from enzyme I to HPr. General (non sugar-specific) component of the phosphoenolpyruvate-dependent sugar phosphotransferase system (sugar PTS). This major carbohydrate active-transport system catalyzes the phosphorylation of incoming sugar substrates concomitantly with their translocation across the cell membrane. The phosphoryl group from phosphoenolpyruvate (PEP) is transferred to the phosphoryl carrier protein HPr by enzyme I. Phospho-HPr then transfers it to the PTS EIIA domain. Its function is as follows. P-Ser-HPr interacts with the catabolite control protein A (CcpA), forming a complex that binds to DNA at the catabolite response elements cre, operator sites preceding a large number of catabolite-regulated genes. Thus, P-Ser-HPr is a corepressor in carbon catabolite repression (CCR), a mechanism that allows bacteria to coordinate and optimize the utilization of available carbon sources. P-Ser-HPr also plays a role in inducer exclusion, in which it probably interacts with several non-PTS permeases and inhibits their transport activity. The chain is Phosphocarrier protein HPr (ptsH) from Latilactobacillus sakei (Lactobacillus sakei).